Consider the following 412-residue polypeptide: Thyroxine-binding globulin (412 aa).

Residues 1–16 form the signal peptide; sequence MPLFLYMVLLVLGIHC. 5 N-linked (GlcNAc...) asparagine glycosylation sites follow: Asn20, Asn35, Asn98, Asn164, and Asn252. Thyroxine-binding residues include Asn292 and Lys395.

The protein belongs to the serpin family. In terms of tissue distribution, expressed by the liver and secreted in plasma.

It localises to the secreted. Functionally, major thyroid hormone transport protein in serum. The polypeptide is Thyroxine-binding globulin (SERPINA7) (Sus scrofa (Pig)).